Here is a 365-residue protein sequence, read N- to C-terminus: Chorismate synthase (365 aa).

Arg-46 contacts NADP(+). Residues 123-125, 241-242, Gly-281, 296-300, and Arg-322 contribute to the FMN site; these read RSS, NG, and KPTPS.

It belongs to the chorismate synthase family. In terms of assembly, homotetramer. The cofactor is FMNH2.

It catalyses the reaction 5-O-(1-carboxyvinyl)-3-phosphoshikimate = chorismate + phosphate. It functions in the pathway metabolic intermediate biosynthesis; chorismate biosynthesis; chorismate from D-erythrose 4-phosphate and phosphoenolpyruvate: step 7/7. Its function is as follows. Catalyzes the anti-1,4-elimination of the C-3 phosphate and the C-6 proR hydrogen from 5-enolpyruvylshikimate-3-phosphate (EPSP) to yield chorismate, which is the branch point compound that serves as the starting substrate for the three terminal pathways of aromatic amino acid biosynthesis. This reaction introduces a second double bond into the aromatic ring system. The protein is Chorismate synthase of Helicobacter pylori (strain G27).